The following is a 348-amino-acid chain: Putative [LysW]-L-2-aminoadipate/[LysW]-L-glutamate phosphate reductase (348 aa).

9–12 contributes to the NADP(+) binding site; the sequence is SGYV. Cys149 is a catalytic residue. Asn315 contacts NADP(+).

It belongs to the NAGSA dehydrogenase family. Type 1 subfamily. LysY sub-subfamily.

The protein resides in the cytoplasm. It carries out the reaction [amino-group carrier protein]-C-terminal-N-(1-carboxy-5-oxopentan-1-yl)-L-glutamine + phosphate + NADP(+) = [amino-group carrier protein]-C-terminal-N-(1-carboxy-5-phosphooxy-5-oxopentan-1-yl)-L-glutamine + NADPH + H(+). The catalysed reaction is [amino-group carrier protein]-C-terminal-gamma-(L-glutamyl-5-semialdehyde)-L-glutamate + phosphate + NADP(+) = [amino-group carrier protein]-C-terminal-gamma-(5-phospho-L-glutamyl)-L-glutamate + NADPH + H(+). It functions in the pathway amino-acid biosynthesis; L-lysine biosynthesis via AAA pathway; L-lysine from L-alpha-aminoadipate (Thermus route): step 3/5. It participates in amino-acid biosynthesis; L-arginine biosynthesis. Involved in both the arginine and lysine biosynthetic pathways. The protein is Putative [LysW]-L-2-aminoadipate/[LysW]-L-glutamate phosphate reductase of Nitrosopumilus maritimus (strain SCM1).